We begin with the raw amino-acid sequence, 376 residues long: Putative transcription factor egl-18 (376 aa).

Disordered stretches follow at residues 1 to 33, 65 to 122, 148 to 197, and 240 to 264; these read MSISIMTETRPESAEQQHHEVLQRPSDEPCSGC, NNEL…LPDF, MVQQ…SDIP, and ATPSSQSQDSSMFEKTETSGDPNAA. The segment covering 9 to 27 has biased composition (basic and acidic residues); the sequence is TRPESAEQQHHEVLQRPSD. Composition is skewed to low complexity over residues 68–89 and 165–175; these read LKSSSVSSGKASPSPAESRSSP and QQSVSPPQSKS. A compositionally biased stretch (basic and acidic residues) spans 176–195; it reads VKIEDPMDQDVKQEESERSD. The segment covering 241 to 250 has biased composition (polar residues); the sequence is TPSSQSQDSS. A GATA-type zinc finger spans residues 266-290; that stretch reads CSNCRTDKTTAWRRDAEGKLVCNPC.

In terms of tissue distribution, expressed in differentiated seam cells. Expressed in the head and trunk.

The protein resides in the nucleus. In terms of biological role, probable transcription factor. Involved in embryonic development and in vulval development in larvae, acting redundantly, at least in part, with elt-6. Perhaps acting together with elt-6, may form a positive feedback loop to initiate and maintain lin-39 gene expression to ensure proper vulval precursor cell (VPC) fate specification. Together with elt-6, acts as a downstream target of the Wnt/beta-catenin asymmetry pathway, required to adopt or maintain the seam cell fate. Required in seam cells, acting redundantly with elt-6, to promote production of alae, expression of several seam-specific genes and maintenance of seam cells in an unfused state. Plays a role in longevity. May form a transcriptional circuit with GATA factors elt-3 and elt-6. In Caenorhabditis elegans, this protein is Putative transcription factor egl-18.